The primary structure comprises 246 residues: Purine nucleoside phosphorylase Cgl2154/cg2365 (246 aa).

3 residues coordinate Zn(2+): histidine 68, cysteine 107, and histidine 124.

The protein belongs to the purine nucleoside phosphorylase YfiH/LACC1 family. As to quaternary structure, homodimer. It depends on Cu(2+) as a cofactor. Requires Zn(2+) as cofactor.

The catalysed reaction is adenosine + phosphate = alpha-D-ribose 1-phosphate + adenine. It carries out the reaction S-methyl-5'-thioadenosine + phosphate = 5-(methylsulfanyl)-alpha-D-ribose 1-phosphate + adenine. The enzyme catalyses inosine + phosphate = alpha-D-ribose 1-phosphate + hypoxanthine. It catalyses the reaction adenosine + H2O + H(+) = inosine + NH4(+). Its function is as follows. Purine nucleoside enzyme that catalyzes the phosphorolysis of adenosine and inosine nucleosides, yielding D-ribose 1-phosphate and the respective free bases, adenine and hypoxanthine. Also catalyzes the phosphorolysis of S-methyl-5'-thioadenosine into adenine and S-methyl-5-thio-alpha-D-ribose 1-phosphate. Also has adenosine deaminase activity. This is Purine nucleoside phosphorylase Cgl2154/cg2365 from Corynebacterium glutamicum (strain ATCC 13032 / DSM 20300 / JCM 1318 / BCRC 11384 / CCUG 27702 / LMG 3730 / NBRC 12168 / NCIMB 10025 / NRRL B-2784 / 534).